The chain runs to 517 residues: UDP-N-acetylmuramoyl-L-alanyl-D-glutamate--2,6-diaminopimelate ligase (517 aa).

Residues Leu34 and Ser36 each contribute to the UDP-N-acetyl-alpha-D-muramoyl-L-alanyl-D-glutamate site. 122–128 (GTSGKTT) contacts ATP. Residues 164–165 (TT), Ser191, and Arg199 contribute to the UDP-N-acetyl-alpha-D-muramoyl-L-alanyl-D-glutamate site. N6-carboxylysine is present on Lys231. Residues Arg394, 418-421 (DNPR), Gly476, and Glu480 each bind meso-2,6-diaminopimelate. A Meso-diaminopimelate recognition motif motif is present at residues 418-421 (DNPR).

This sequence belongs to the MurCDEF family. MurE subfamily. The cofactor is Mg(2+). Carboxylation is probably crucial for Mg(2+) binding and, consequently, for the gamma-phosphate positioning of ATP.

It localises to the cytoplasm. It carries out the reaction UDP-N-acetyl-alpha-D-muramoyl-L-alanyl-D-glutamate + meso-2,6-diaminopimelate + ATP = UDP-N-acetyl-alpha-D-muramoyl-L-alanyl-gamma-D-glutamyl-meso-2,6-diaminopimelate + ADP + phosphate + H(+). It functions in the pathway cell wall biogenesis; peptidoglycan biosynthesis. Functionally, catalyzes the addition of meso-diaminopimelic acid to the nucleotide precursor UDP-N-acetylmuramoyl-L-alanyl-D-glutamate (UMAG) in the biosynthesis of bacterial cell-wall peptidoglycan. The polypeptide is UDP-N-acetylmuramoyl-L-alanyl-D-glutamate--2,6-diaminopimelate ligase (Corynebacterium glutamicum (strain ATCC 13032 / DSM 20300 / JCM 1318 / BCRC 11384 / CCUG 27702 / LMG 3730 / NBRC 12168 / NCIMB 10025 / NRRL B-2784 / 534)).